The chain runs to 260 residues: Thrombin-like enzyme gloshedobin (260 aa).

Positions 1–18 (MVLIRVQANLLILQLSYA) are cleaved as a signal peptide. Residues 19–24 (QKSSEL) constitute a propeptide that is removed on maturation. The Peptidase S1 domain maps to 25 to 252 (IIGGDECNIN…TEWIQSIIAG (228 aa)). Cystine bridges form between Cys-31/Cys-165, Cys-52/Cys-68, Cys-100/Cys-258, Cys-144/Cys-212, Cys-176/Cys-191, and Cys-202/Cys-227. Catalysis depends on charge relay system residues His-67 and Asp-112. 2 N-linked (GlcNAc...) asparagine glycosylation sites follow: Asn-123 and Asn-124. Ser-206 functions as the Charge relay system in the catalytic mechanism.

The protein belongs to the peptidase S1 family. Snake venom subfamily. As to quaternary structure, monomer. In terms of tissue distribution, expressed by the venom gland.

It is found in the secreted. Completely inhibited by PMSF, and N-tosyl-Lphenylalanine chloromethyl ketone (TPCK) and poorly inhibited by benzamidine and derivates. Not inhibited by EDTA, heparin and hirudin. In terms of biological role, thrombin-like snake venom serine protease. The recombinant form clots fibrinogen by cleaving fibrinogen Aalpha chain (FGA), and slowly Bbeta chain (FGB). Has amidolytic activities. This chain is Thrombin-like enzyme gloshedobin, found in Gloydius shedaoensis (Shedao island pit viper).